A 511-amino-acid chain; its full sequence is MSAPAVAAGPTAAGATAARPATTRVTILTGRRMTDLVLPAAVPMETYIDDTVAVLSEVLEDTPADVLGGFDFTAQGVWAFARPGSPPLKLDQSLDDAGVVDGSLLTLVSVSRTERYRPLVEDVIDAIAVLDESPEFDRTALNRFVGAAIPLLTAPVIGMAMRAWWETGRSLWWPLAIGILGIAVLVGSFVANRFYQSGHLAECLLVTTYLLIATAAALAVPLPRGVNSLGAPQVAGAATAVLFLTLMTRGGPRKRHELASFAVITAIAVIAAAAAFGYGYQDWVPAGGIAFGLFIVTNAAKLTVAVARIALPPIPVPGETVDNEELLDPVATPEATSEETPTWQAIIASVPASAVRLTERSKLAKQLLIGYVTSGTLILAAGAIAVVVRGHFFVHSLVVAGLITTVCGFRSRLYAERWCAWALLAATVAIPTGLTAKLIIWYPHYAWLLLSVYLTVALVALVVVGSMAHVRRVSPVVKRTLELIDGAMIAAIIPMLLWITGVYDTVRNIRF.

At S2 the chain carries N-acetylserine. At 2 to 143 the chain is on the cytoplasmic side; the sequence is SAPAVAAGPT…PEFDRTALNR (142 aa). The helical transmembrane segment at 144 to 164 threads the bilayer; that stretch reads FVGAAIPLLTAPVIGMAMRAW. The Periplasmic portion of the chain corresponds to 165–170; the sequence is WETGRS. A helical membrane pass occupies residues 171-191; the sequence is LWWPLAIGILGIAVLVGSFVA. The Cytoplasmic segment spans residues 192–202; that stretch reads NRFYQSGHLAE. The helical transmembrane segment at 203-223 threads the bilayer; sequence CLLVTTYLLIATAAALAVPLP. Over 224–227 the chain is Periplasmic; sequence RGVN. Residues 228-248 traverse the membrane as a helical segment; it reads SLGAPQVAGAATAVLFLTLMT. At 249–257 the chain is on the cytoplasmic side; it reads RGGPRKRHE. Residues 258–278 traverse the membrane as a helical segment; the sequence is LASFAVITAIAVIAAAAAFGY. Residues 279–285 are Periplasmic-facing; it reads GYQDWVP. A helical transmembrane segment spans residues 286-306; that stretch reads AGGIAFGLFIVTNAAKLTVAV. Residues 307–367 lie on the Cytoplasmic side of the membrane; sequence ARIALPPIPV…TERSKLAKQL (61 aa). 2 helical membrane passes run 368 to 388 and 389 to 409; these read LIGY…AVVV and RGHF…VCGF. Topologically, residues 410–420 are cytoplasmic; that stretch reads RSRLYAERWCA. A helical transmembrane segment spans residues 421–441; it reads WALLAATVAIPTGLTAKLIIW. Residues 442–444 lie on the Periplasmic side of the membrane; it reads YPH. Residues 445 to 465 traverse the membrane as a helical segment; that stretch reads YAWLLLSVYLTVALVALVVVG. The Cytoplasmic segment spans residues 466–482; the sequence is SMAHVRRVSPVVKRTLE. Residues 483–503 traverse the membrane as a helical segment; it reads LIDGAMIAAIIPMLLWITGVY. Residues 504 to 511 are Periplasmic-facing; the sequence is DTVRNIRF.

The protein belongs to the EccD/Snm4 family. As to quaternary structure, possibly a homodimer. Part of the ESX-1 / type VII secretion system (T7SS), which is composed of cytosolic and membrane components. The ESX-1 membrane complex is composed of EccB1, EccCa1, EccCb1, EccD1 and EccE1.

Its subcellular location is the cell inner membrane. Its function is as follows. Part of the ESX-1 specialized secretion system, which delivers several virulence factors to host cells during infection, including the key virulence factors EsxA (ESAT-6) and EsxB (CFP-10). The sequence is that of ESX-1 secretion system protein EccD1 from Mycobacterium tuberculosis (strain ATCC 25618 / H37Rv).